The chain runs to 565 residues: Membrane protein insertase YidC (565 aa).

6 consecutive transmembrane segments (helical) span residues 6-26 (VLLI…WGKN), 348-368 (LMAL…SLLH), 370-390 (WGWA…PLSA), 437-457 (GGCF…WVLV), 479-499 (PYFI…KLTP), and 516-536 (PLIF…YWVI).

It belongs to the OXA1/ALB3/YidC family. Type 1 subfamily. In terms of assembly, interacts with the Sec translocase complex via SecD. Specifically interacts with transmembrane segments of nascent integral membrane proteins during membrane integration.

It is found in the cell inner membrane. Required for the insertion and/or proper folding and/or complex formation of integral membrane proteins into the membrane. Involved in integration of membrane proteins that insert both dependently and independently of the Sec translocase complex, as well as at least some lipoproteins. Aids folding of multispanning membrane proteins. The protein is Membrane protein insertase YidC of Xylella fastidiosa (strain M12).